Here is a 777-residue protein sequence, read N- to C-terminus: Glucocorticoid receptor (777 aa).

Residues 1–14 (MDSKESLTPGREEN) are compositionally biased toward basic and acidic residues. The tract at residues 1-23 (MDSKESLTPGREENPSSVLAQER) is disordered. Residues 1 to 420 (MDSKESLTPG…TATTGPPPKL (420 aa)) are modulating. Phosphothreonine is present on threonine 8. An Omega-N-methylarginine modification is found at arginine 23. Serine 45, serine 113, serine 134, and serine 141 each carry phosphoserine. Residues 130-140 (NRSTSVPENPK) are compositionally biased toward polar residues. The segment at 130 to 183 (NRSTSVPENPKSSASTAVSAAPTEKEFPKTHSDISSEQQHLKGQTGTNGGNVKL) is disordered. Residues 141 to 150 (SSASTAVSAA) show a composition bias toward low complexity. The span at 152–163 (TEKEFPKTHSDI) shows a compositional bias: basic and acidic residues. Residues 164–174 (SSEQQHLKGQT) show a composition bias toward polar residues. Serine 203, serine 211, and serine 226 each carry phosphoserine. Residue lysine 258 forms a Glycyl lysine isopeptide (Lys-Gly) (interchain with G-Cter in SUMO2) linkage. Serine 267 is subject to Phosphoserine. Glycyl lysine isopeptide (Lys-Gly) (interchain with G-Cter in SUMO); alternate cross-links involve residues lysine 277 and lysine 293. Glycyl lysine isopeptide (Lys-Gly) (interchain with G-Cter in SUMO2); alternate cross-links involve residues lysine 277 and lysine 293. Positions 394–414 (SSPSMRPDVSSPPSSSSTATT) are enriched in low complexity. The interval 394–415 (SSPSMRPDVSSPPSSSSTATTG) is disordered. Residue serine 404 is modified to Phosphoserine. Lysine 419 is covalently cross-linked (Glycyl lysine isopeptide (Lys-Gly) (interchain with G-Cter in ubiquitin)). 2 consecutive NR C4-type zinc fingers follow at residues 421–441 (CLVC…CGSC) and 457–476 (CAGR…CPAC). The segment at residues 421–486 (CLVCSDEASG…RYRKCLQAGM (66 aa)) is a DNA-binding region (nuclear receptor). N6-acetyllysine occurs at positions 480, 492, 494, and 495. The interval 485 to 777 (GMNLEARKTK…NIKKLLFHQK (293 aa)) is interaction with CLOCK. A hinge region spans residues 487–523 (NLEARKTKKKIKGIQQATTGVSQETPENPANKTIVPA). The 235-residue stretch at 524 to 758 (TLPQLTPTLV…FPEMLAEIIT (235 aa)) folds into the NR LBD domain. The interaction with CRY1 stretch occupies residues 532-697 (LVSLLEVIEP…EIRMTYIKEL (166 aa)). A Glycyl lysine isopeptide (Lys-Gly) (interchain with G-Cter in SUMO) cross-link involves residue lysine 703.

It belongs to the nuclear hormone receptor family. NR3 subfamily. As to quaternary structure, heteromultimeric cytoplasmic complex with HSP90AA1, HSPA1A/HSPA1B, and FKBP5 or another immunophilin such as PPID, STIP1, or the immunophilin homolog PPP5C. Upon ligand binding FKBP5 dissociates from the complex and FKBP4 takes its place, thereby linking the complex to dynein and mediating transport to the nucleus, where the complex dissociates. Probably forms a complex composed of chaperones HSP90 and HSP70, co-chaperones CDC37, PPP5C, TSC1 and client protein TSC2, CDK4, AKT, RAF1 and NR3C1; this complex does not contain co-chaperones STIP1/HOP and PTGES3/p23. Directly interacts with UNC45A. Binds to DNA as a homodimer, and as heterodimer with NR3C2 or the retinoid X receptor. Binds STAT5A and STAT5B homodimers and heterodimers. Interacts with NRIP1, POU2F1, POU2F2 and TRIM28. Interacts with several coactivator complexes, including the SMARCA4 complex, CREBBP/EP300, TADA2L (Ada complex) and p160 coactivators such as NCOA2 and NCOA6. Interaction with BAG1 inhibits transactivation. Interacts with HEXIM1 and TGFB1I1. Interacts with NCOA1. Interacts with NCOA3, SMARCA4, SMARCC1, SMARCD1, and SMARCE1. Interacts with CLOCK, CRY1 and CRY2 in a ligand-dependent fashion. Interacts with CIART. Interacts with RWDD3. Interacts with UBE2I/UBC9 and this interaction is enhanced in the presence of RWDD3. Interacts with GRIP1. Interacts with NR4A3 (via nuclear receptor DNA-binding domain), represses transcription activity of NR4A3 on the POMC promoter Nur response element (NurRE). Directly interacts with PNRC2 to attract and form a complex with UPF1 and DCP1A; the interaction leads to rapid mRNA degradation. Interacts with GSK3B. Interacts with FNIP1 and FNIP2. Interacts (via C-terminus) with HNRNPU (via C-terminus). Interacts with MCM3AP. Interacts (via domain NR LBD) with HSP90AA1 and HSP90AB1. In the absence of hormonal ligand, interacts with TACC1. Interacts (via NR LBD domain) with ZNF764 (via KRAB domain); the interaction regulates transcription factor activity of NR3C1 by directing its actions toward certain biologic pathways. In terms of processing, acetylation by CLOCK reduces its binding to glucocorticoid response elements and its transcriptional activity. Increased proteasome-mediated degradation in response to glucocorticoids. Post-translationally, phosphorylated in the absence of hormone; becomes hyperphosphorylated in the presence of glucocorticoid. The Ser-203, Ser-226 and Ser-404-phosphorylated forms are mainly cytoplasmic, and the Ser-211-phosphorylated form is nuclear. Phosphorylation at Ser-211 increases transcriptional activity. Phosphorylation at Ser-203, Ser-226 and Ser-404 decreases signaling capacity. Phosphorylation at Ser-404 may protect from glucocorticoid-induced apoptosis. Phosphorylation at Ser-203 and Ser-211 is not required in regulation of chromosome segregation. May be dephosphorylated by PPP5C, attenuates NR3C1 action. In terms of processing, ubiquitinated by UBR5, leading to its degradation: UBR5 specifically recognizes and binds ligand-bound NR3C1 when it is not associated with coactivators (NCOAs). In presence of NCOAs, the UBR5-degron is not accessible, preventing its ubiquitination and degradation. Sumoylation at Lys-277 and Lys-293 negatively regulates its transcriptional activity. Sumoylation at Lys-703 positively regulates its transcriptional activity in the presence of RWDD3. Sumoylation at Lys-277 and Lys-293 is dispensable whereas sumoylation at Lys-703 is critical for the stimulatory effect of RWDD3 on its transcriptional activity. Heat shock increases sumoylation in a RWDD3-dependent manner.

The protein resides in the cytoplasm. The protein localises to the nucleus. It is found in the mitochondrion. Its subcellular location is the cytoskeleton. It localises to the spindle. The protein resides in the microtubule organizing center. The protein localises to the centrosome. It is found in the chromosome. Its subcellular location is the nucleoplasm. Receptor for glucocorticoids (GC). Has a dual mode of action: as a transcription factor that binds to glucocorticoid response elements (GRE), both for nuclear and mitochondrial DNA, and as a modulator of other transcription factors. Affects inflammatory responses, cellular proliferation and differentiation in target tissues. Involved in chromatin remodeling. Plays a role in rapid mRNA degradation by binding to the 5' UTR of target mRNAs and interacting with PNRC2 in a ligand-dependent manner which recruits the RNA helicase UPF1 and the mRNA-decapping enzyme DCP1A, leading to RNA decay. Could act as a coactivator for STAT5-dependent transcription upon growth hormone (GH) stimulation and could reveal an essential role of hepatic GR in the control of body growth. Mediates glucocorticoid-induced apoptosis. Promotes accurate chromosome segregation during mitosis. May act as a tumor suppressor. May play a negative role in adipogenesis through the regulation of lipolytic and antilipogenic gene expression. The polypeptide is Glucocorticoid receptor (NR3C1) (Pongo abelii (Sumatran orangutan)).